The sequence spans 523 residues: Butyrophilin subfamily 2 member A2 (523 aa).

The N-terminal stretch at 1–32 (MEPAAALHFSLPASLLLLLLLLLLSLCALVSA) is a signal peptide. Over 33-265 (QFTVVGPANP…AVILTASPWM (233 aa)) the chain is Extracellular. One can recognise an Ig-like V-type domain in the interval 34 to 145 (FTVVGPANPI…SYDEAILRLV (112 aa)). Residues Asn50, Asn118, Asn220, and Asn226 are each glycosylated (N-linked (GlcNAc...) asparagine). Cys55 and Cys129 are joined by a disulfide. The 82-residue stretch at 153–234 (PLIEIKAQED…VNNTLLGQEK (82 aa)) folds into the Ig-like C2-type domain. The helical transmembrane segment at 266-286 (VSMTVILAVFIIFMAVSICCI) threads the bilayer. Positions 286 to 321 (IKKLQREKKILSGEKKVEQEEKEIAQQLQEELRWRR) form a coiled coil. Topologically, residues 287-523 (KKLQREKKIL…LHRVGTHQSL (237 aa)) are cytoplasmic. The 194-residue stretch at 309 to 502 (IAQQLQEELR…IFICPALTGA (194 aa)) folds into the B30.2/SPRY domain.

It belongs to the immunoglobulin superfamily. BTN/MOG family. N-glycosylated. In terms of tissue distribution, highly expressed in brain, bone marrow, small intestine, muscle, spleen and pancreas. Moderate expression was seen in lung, liver and kidney.

It localises to the membrane. Functionally, inhibits the proliferation of CD4 and CD8 T-cells activated by anti-CD3 antibodies, T-cell metabolism and IL2 and IFNG secretion. This is Butyrophilin subfamily 2 member A2 (BTN2A2) from Homo sapiens (Human).